Here is a 336-residue protein sequence, read N- to C-terminus: Large ribosomal subunit protein uL10 (336 aa).

The interval 305-336 (AVVATEEAPKAETKKEEKKEEAAPAAGLGLLF) is disordered. Residues 311 to 326 (EAPKAETKKEEKKEEA) are compositionally biased toward basic and acidic residues.

It belongs to the universal ribosomal protein uL10 family. As to quaternary structure, part of the 50S ribosomal subunit. Forms part of the ribosomal stalk which helps the ribosome interact with GTP-bound translation factors. Forms a heptameric L10(L12)2(L12)2(L12)2 complex, where L10 forms an elongated spine to which the L12 dimers bind in a sequential fashion.

Its function is as follows. Forms part of the ribosomal stalk, playing a central role in the interaction of the ribosome with GTP-bound translation factors. In Methanococcus vannielii (strain ATCC 35089 / DSM 1224 / JCM 13029 / OCM 148 / SB), this protein is Large ribosomal subunit protein uL10.